Reading from the N-terminus, the 292-residue chain is Probable xyloglucan endotransglucosylase/hydrolase protein 6 (292 aa).

Residues 1-30 (MAKIYSPSFPGTLCLCIFTLLTLMFIRVSA) form the signal peptide. One can recognise a GH16 domain in the interval 31 to 224 (RPATFVEDFK…WSKAPFYAYY (194 aa)). The active-site Nucleophile is the E110. E114 (proton donor) is an active-site residue. E114 serves as a coordination point for xyloglucan. N118 is a glycosylation site (N-linked (GlcNAc...) asparagine). Residues 127 to 129 (QTN), 137 to 139 (DRE), 203 to 204 (DW), and G208 each bind xyloglucan. Cystine bridges form between C232–C240 and C277–C290. Residue R282 participates in xyloglucan binding.

It belongs to the glycosyl hydrolase 16 family. XTH group 1 subfamily. Post-translationally, contains at least one intrachain disulfide bond essential for its enzymatic activity.

Its subcellular location is the secreted. It is found in the cell wall. The protein resides in the extracellular space. It localises to the apoplast. The catalysed reaction is breaks a beta-(1-&gt;4) bond in the backbone of a xyloglucan and transfers the xyloglucanyl segment on to O-4 of the non-reducing terminal glucose residue of an acceptor, which can be a xyloglucan or an oligosaccharide of xyloglucan.. Functionally, catalyzes xyloglucan endohydrolysis (XEH) and/or endotransglycosylation (XET). Cleaves and religates xyloglucan polymers, an essential constituent of the primary cell wall, and thereby participates in cell wall construction of growing tissues. This is Probable xyloglucan endotransglucosylase/hydrolase protein 6 (XTH6) from Arabidopsis thaliana (Mouse-ear cress).